Consider the following 502-residue polypeptide: ATP synthase subunit alpha (502 aa).

The disordered stretch occupies residues Val-115–Gly-135. Gly-169–Thr-176 contacts ATP.

It belongs to the ATPase alpha/beta chains family. As to quaternary structure, F-type ATPases have 2 components, CF(1) - the catalytic core - and CF(0) - the membrane proton channel. CF(1) has five subunits: alpha(3), beta(3), gamma(1), delta(1), epsilon(1). CF(0) has three main subunits: a(1), b(2) and c(9-12). The alpha and beta chains form an alternating ring which encloses part of the gamma chain. CF(1) is attached to CF(0) by a central stalk formed by the gamma and epsilon chains, while a peripheral stalk is formed by the delta and b chains.

It localises to the cell membrane. The catalysed reaction is ATP + H2O + 4 H(+)(in) = ADP + phosphate + 5 H(+)(out). Its function is as follows. Produces ATP from ADP in the presence of a proton gradient across the membrane. The alpha chain is a regulatory subunit. The chain is ATP synthase subunit alpha from Bacillus cereus (strain B4264).